The chain runs to 485 residues: Glycogen synthase (485 aa).

Residue lysine 18 participates in ADP-alpha-D-glucose binding.

The protein belongs to the glycosyltransferase 1 family. Bacterial/plant glycogen synthase subfamily.

It carries out the reaction [(1-&gt;4)-alpha-D-glucosyl](n) + ADP-alpha-D-glucose = [(1-&gt;4)-alpha-D-glucosyl](n+1) + ADP + H(+). It participates in glycan biosynthesis; glycogen biosynthesis. Synthesizes alpha-1,4-glucan chains using ADP-glucose. The polypeptide is Glycogen synthase (Dechloromonas aromatica (strain RCB)).